The following is a 187-amino-acid chain: Signal peptidase I U (187 aa).

Topologically, residues 1-16 (MNAKTITLKKKRKIKT) are cytoplasmic. A helical membrane pass occupies residues 17-37 (IVVLSIIMIAALIFTIRLVFY). Residues 38 to 187 (KPFLIEGSSM…YPFGEMRQAK (150 aa)) are Extracellular-facing. Residues Ser46 and Lys88 contribute to the active site.

The protein belongs to the peptidase S26 family.

The protein localises to the cell membrane. The catalysed reaction is Cleavage of hydrophobic, N-terminal signal or leader sequences from secreted and periplasmic proteins.. This chain is Signal peptidase I U (sipU), found in Bacillus subtilis (strain 168).